The chain runs to 272 residues: Deaminated glutathione amidase (272 aa).

Residues 1 to 253 (MKPYLAAALQ…PGLAIAEINP (253 aa)) enclose the CN hydrolase domain. Glu-43 acts as the Proton acceptor in catalysis. Catalysis depends on Lys-115, which acts as the Proton donor. Cys-158 (nucleophile) is an active-site residue.

The protein belongs to the carbon-nitrogen hydrolase superfamily. NIT1/NIT2 family.

The enzyme catalyses N-(4-oxoglutaryl)-L-cysteinylglycine + H2O = L-cysteinylglycine + 2-oxoglutarate. Its function is as follows. Hydrolyzes deaminated glutathione (dGSH, 2-oxoglutaramate) to alpha-ketoglutarate (alpha-KG) and cysteinylglycine (specific activity 7.77 umol/min/mg), hydrolyzes alpha-ketoglutaramate (a-KGM, specific activity 2.13 umol/min/mg), has no activity on glutathione or L-glutamine. May function as a metabolite repair enzyme. This Synechocystis sp. (strain PCC 6803 / GT-S) protein is Deaminated glutathione amidase.